We begin with the raw amino-acid sequence, 199 residues long: Small ribosomal subunit protein uS2 (199 aa).

It belongs to the universal ribosomal protein uS2 family.

The polypeptide is Small ribosomal subunit protein uS2 (rps2) (Thermoplasma volcanium (strain ATCC 51530 / DSM 4299 / JCM 9571 / NBRC 15438 / GSS1)).